The following is a 92-amino-acid chain: DNA-directed RNA polymerase subunit Rpo11 (92 aa).

This sequence belongs to the archaeal Rpo11/eukaryotic RPB11/RPC19 RNA polymerase subunit family. In terms of assembly, part of the 13-subunit RNA polymerase complex.

The protein localises to the cytoplasm. The catalysed reaction is RNA(n) + a ribonucleoside 5'-triphosphate = RNA(n+1) + diphosphate. DNA-dependent RNA polymerase (RNAP) catalyzes the transcription of DNA into RNA using the four ribonucleoside triphosphates as substrates. This chain is DNA-directed RNA polymerase subunit Rpo11, found in Saccharolobus shibatae (strain ATCC 51178 / DSM 5389 / JCM 8931 / NBRC 15437 / B12) (Sulfolobus shibatae).